The chain runs to 287 residues: NAD kinase (287 aa).

Catalysis depends on aspartate 66, which acts as the Proton acceptor. NAD(+)-binding positions include 66-67 (DG), 137-138 (ND), arginine 148, arginine 165, aspartate 167, and 178-183 (TAYSMS).

Belongs to the NAD kinase family. The cofactor is a divalent metal cation.

It is found in the cytoplasm. The enzyme catalyses NAD(+) + ATP = ADP + NADP(+) + H(+). Involved in the regulation of the intracellular balance of NAD and NADP, and is a key enzyme in the biosynthesis of NADP. Catalyzes specifically the phosphorylation on 2'-hydroxyl of the adenosine moiety of NAD to yield NADP. The chain is NAD kinase from Chlorobium limicola (strain DSM 245 / NBRC 103803 / 6330).